The following is a 267-amino-acid chain: Orotidine 5'-phosphate decarboxylase (267 aa).

Substrate is bound by residues Asp40, 62–64, 93–102, Tyr215, and Arg234; these read KTH and DRKFADIGNT. Residue Lys95 is the Proton donor of the active site.

Belongs to the OMP decarboxylase family.

The enzyme catalyses orotidine 5'-phosphate + H(+) = UMP + CO2. It functions in the pathway pyrimidine metabolism; UMP biosynthesis via de novo pathway; UMP from orotate: step 2/2. The chain is Orotidine 5'-phosphate decarboxylase (pyrG) from Phycomyces blakesleeanus (strain ATCC 8743b / DSM 1359 / FGSC 10004 / NBRC 33097 / NRRL 1555).